Reading from the N-terminus, the 557-residue chain is Ribonuclease J 2 (557 aa).

Zn(2+)-binding residues include His76, His78, His144, and Glu166. Residue 366-370 (HASSH) coordinates substrate.

It belongs to the metallo-beta-lactamase superfamily. RNA-metabolizing metallo-beta-lactamase-like family. Bacterial RNase J subfamily. As to quaternary structure, homodimer, may be a subunit of the RNA degradosome. The cofactor is Zn(2+).

It is found in the cytoplasm. An RNase that has 5'-3' exonuclease and possibly endoonuclease activity. Involved in maturation of rRNA and in some organisms also mRNA maturation and/or decay. The chain is Ribonuclease J 2 from Staphylococcus epidermidis (strain ATCC 35984 / DSM 28319 / BCRC 17069 / CCUG 31568 / BM 3577 / RP62A).